The chain runs to 129 residues: D-ribose pyranase (129 aa).

His20 acts as the Proton donor in catalysis. Substrate contacts are provided by residues Asp28, His96, and 118–120; that span reads YAN.

Belongs to the RbsD / FucU family. RbsD subfamily. Homodecamer.

The protein localises to the cytoplasm. The catalysed reaction is beta-D-ribopyranose = beta-D-ribofuranose. Its pathway is carbohydrate metabolism; D-ribose degradation; D-ribose 5-phosphate from beta-D-ribopyranose: step 1/2. Catalyzes the interconversion of beta-pyran and beta-furan forms of D-ribose. In Staphylococcus saprophyticus subsp. saprophyticus (strain ATCC 15305 / DSM 20229 / NCIMB 8711 / NCTC 7292 / S-41), this protein is D-ribose pyranase.